The chain runs to 144 residues: D-aminoacyl-tRNA deacylase (144 aa).

The Gly-cisPro motif, important for rejection of L-amino acids motif lies at 136–137 (GP).

Belongs to the DTD family. Homodimer.

Its subcellular location is the cytoplasm. It carries out the reaction glycyl-tRNA(Ala) + H2O = tRNA(Ala) + glycine + H(+). The catalysed reaction is a D-aminoacyl-tRNA + H2O = a tRNA + a D-alpha-amino acid + H(+). An aminoacyl-tRNA editing enzyme that deacylates mischarged D-aminoacyl-tRNAs. Also deacylates mischarged glycyl-tRNA(Ala), protecting cells against glycine mischarging by AlaRS. Acts via tRNA-based rather than protein-based catalysis; rejects L-amino acids rather than detecting D-amino acids in the active site. By recycling D-aminoacyl-tRNA to D-amino acids and free tRNA molecules, this enzyme counteracts the toxicity associated with the formation of D-aminoacyl-tRNA entities in vivo and helps enforce protein L-homochirality. In Haemophilus ducreyi (strain 35000HP / ATCC 700724), this protein is D-aminoacyl-tRNA deacylase.